The primary structure comprises 196 residues: V-type proton ATPase proteolipid subunit (196 aa).

Topologically, residues 1 to 25 (MFQLLSFLLSGEATAVERIITDACP) are lumenal. Residues 26 to 46 (VYAPFFGAMGVTAALVFTVMG) traverse the membrane as a helical segment. The Cytoplasmic segment spans residues 47-72 (AAYGTAKASVGISNMGVMKPDLVIKA). A helical transmembrane segment spans residues 73–93 (FIPVIFAGVIAIYGLIICVIL). The Lumenal portion of the chain corresponds to 94-111 (VGGIKPNANYTLMKSFTD). A helical membrane pass occupies residues 112 to 132 (LGAGLTVGLCGLAAGMAIGIV). Residues 133–150 (GDSGVRAFGQQPKLYVIM) lie on the Cytoplasmic side of the membrane. A helical membrane pass occupies residues 151–171 (MLILIFSEALGLYGLIIGILL). Over 172–196 (SSVSDTYCPGQALVPLNSGNVIGKN) the chain is Lumenal.

This sequence belongs to the V-ATPase proteolipid subunit family. As to quaternary structure, V-ATPase is a heteromultimeric enzyme composed of a peripheral catalytic V1 complex (main components: subunits A, B, C, D, E, and F) attached to an integral membrane V0 proton pore complex (main component: the proteolipid protein; which is present as a hexamer that forms the proton-conducting pore).

The protein resides in the vacuole membrane. In terms of biological role, proton-conducting pore forming subunit of the membrane integral V0 complex of vacuolar ATPase. V-ATPase is responsible for acidifying a variety of intracellular compartments in eukaryotic cells. The chain is V-type proton ATPase proteolipid subunit (vatP) from Dictyostelium discoideum (Social amoeba).